A 270-amino-acid chain; its full sequence is ATP synthase subunit a 1 (270 aa).

Transmembrane regions (helical) follow at residues 38–58 (VHID…GIFY), 98–118 (IAPL…MDLV), 143–163 (DVNI…YYSI), 208–228 (LFGN…MLPW), and 239–259 (AIFH…LTIV).

The protein belongs to the ATPase A chain family. In terms of assembly, F-type ATPases have 2 components, CF(1) - the catalytic core - and CF(0) - the membrane proton channel. CF(1) has five subunits: alpha(3), beta(3), gamma(1), delta(1), epsilon(1). CF(0) has three main subunits: a(1), b(2) and c(9-12). The alpha and beta chains form an alternating ring which encloses part of the gamma chain. CF(1) is attached to CF(0) by a central stalk formed by the gamma and epsilon chains, while a peripheral stalk is formed by the delta and b chains.

It localises to the cell inner membrane. In terms of biological role, key component of the proton channel; it plays a direct role in the translocation of protons across the membrane. This Vibrio campbellii (strain ATCC BAA-1116) protein is ATP synthase subunit a 1.